Reading from the N-terminus, the 85-residue chain is Large ribosomal subunit protein bL27 (85 aa).

Residues 1 to 26 are disordered; that stretch reads MAHKKAGGSTRNGRDSESKRLGVKRF.

The protein belongs to the bacterial ribosomal protein bL27 family.

The chain is Large ribosomal subunit protein bL27 from Saccharophagus degradans (strain 2-40 / ATCC 43961 / DSM 17024).